The chain runs to 445 residues: Phosphoglucosamine mutase (445 aa).

The active-site Phosphoserine intermediate is the serine 105. Mg(2+)-binding residues include serine 105, aspartate 244, aspartate 246, and aspartate 248. Phosphoserine is present on serine 105.

This sequence belongs to the phosphohexose mutase family. Requires Mg(2+) as cofactor. Post-translationally, activated by phosphorylation.

The enzyme catalyses alpha-D-glucosamine 1-phosphate = D-glucosamine 6-phosphate. In terms of biological role, catalyzes the conversion of glucosamine-6-phosphate to glucosamine-1-phosphate. This chain is Phosphoglucosamine mutase, found in Janthinobacterium sp. (strain Marseille) (Minibacterium massiliensis).